Reading from the N-terminus, the 280-residue chain is Energy-coupling factor transporter ATP-binding protein EcfA2 (280 aa).

The region spanning 3–245 (ISLENVSYTY…VAFLKEKQLG (243 aa)) is the ABC transporter domain. 40–47 (GHTGSGKS) lines the ATP pocket.

It belongs to the ABC transporter superfamily. Energy-coupling factor EcfA family. As to quaternary structure, forms a stable energy-coupling factor (ECF) transporter complex composed of 2 membrane-embedded substrate-binding proteins (S component), 2 ATP-binding proteins (A component) and 2 transmembrane proteins (T component).

The protein localises to the cell membrane. Its function is as follows. ATP-binding (A) component of a common energy-coupling factor (ECF) ABC-transporter complex. Unlike classic ABC transporters this ECF transporter provides the energy necessary to transport a number of different substrates. The polypeptide is Energy-coupling factor transporter ATP-binding protein EcfA2 (Streptococcus thermophilus (strain CNRZ 1066)).